The following is a 108-amino-acid chain: MKLSPKDNERLKIFMAAELAKQRKDRGVKLNHPETIAYISNWVCERARDGMDVAEIRQEATSLLTREDVMDGVPEMIDMVQVEPTFSDGTKLVTVHDPIRGDTREQVE.

This sequence belongs to the urease gamma subunit family. Heterotrimer of UreA (gamma), UreB (beta) and UreC (alpha) subunits. Three heterotrimers associate to form the active enzyme.

The protein localises to the cytoplasm. It carries out the reaction urea + 2 H2O + H(+) = hydrogencarbonate + 2 NH4(+). It functions in the pathway nitrogen metabolism; urea degradation; CO(2) and NH(3) from urea (urease route): step 1/1. The polypeptide is Urease subunit gamma (Haloquadratum walsbyi (strain DSM 16790 / HBSQ001)).